Here is a 197-residue protein sequence, read N- to C-terminus: Large ribosomal subunit protein bL25 (197 aa).

Belongs to the bacterial ribosomal protein bL25 family. CTC subfamily. In terms of assembly, part of the 50S ribosomal subunit; part of the 5S rRNA/L5/L18/L25 subcomplex. Contacts the 5S rRNA. Binds to the 5S rRNA independently of L5 and L18.

In terms of biological role, this is one of the proteins that binds to the 5S RNA in the ribosome where it forms part of the central protuberance. This chain is Large ribosomal subunit protein bL25, found in Pseudomonas putida (strain GB-1).